A 229-amino-acid chain; its full sequence is ATP synthase subunit a (229 aa).

The next 6 helical transmembrane spans lie at Ala-25–Ala-45, Ile-86–Phe-106, Asn-111–Ile-131, Phe-142–Leu-162, Leu-181–Met-201, and Gly-202–Gln-222.

The protein belongs to the ATPase A chain family. F-type ATPases have 2 components, CF(1) - the catalytic core - and CF(0) - the membrane proton channel. CF(1) has five subunits: alpha(3), beta(3), gamma(1), delta(1), epsilon(1). CF(0) has three main subunits: a(1), b(2) and c(9-12). The alpha and beta chains form an alternating ring which encloses part of the gamma chain. CF(1) is attached to CF(0) by a central stalk formed by the gamma and epsilon chains, while a peripheral stalk is formed by the delta and b chains.

It is found in the cell inner membrane. In terms of biological role, key component of the proton channel; it plays a direct role in the translocation of protons across the membrane. In Geobacter sulfurreducens (strain ATCC 51573 / DSM 12127 / PCA), this protein is ATP synthase subunit a.